The sequence spans 134 residues: Small ribosomal subunit protein uS11 (134 aa).

This sequence belongs to the universal ribosomal protein uS11 family. Part of the 30S ribosomal subunit. Interacts with proteins S7 and S18. Binds to IF-3.

Its function is as follows. Located on the platform of the 30S subunit, it bridges several disparate RNA helices of the 16S rRNA. Forms part of the Shine-Dalgarno cleft in the 70S ribosome. In Janthinobacterium sp. (strain Marseille) (Minibacterium massiliensis), this protein is Small ribosomal subunit protein uS11.